The sequence spans 121 residues: Holo-[acyl-carrier-protein] synthase (121 aa).

2 residues coordinate Mg(2+): D8 and E55.

The protein belongs to the P-Pant transferase superfamily. AcpS family. Mg(2+) serves as cofactor.

The protein resides in the cytoplasm. It carries out the reaction apo-[ACP] + CoA = holo-[ACP] + adenosine 3',5'-bisphosphate + H(+). Its function is as follows. Transfers the 4'-phosphopantetheine moiety from coenzyme A to a Ser of acyl-carrier-protein. The polypeptide is Holo-[acyl-carrier-protein] synthase (Caldicellulosiruptor bescii (strain ATCC BAA-1888 / DSM 6725 / KCTC 15123 / Z-1320) (Anaerocellum thermophilum)).